We begin with the raw amino-acid sequence, 110 residues long: Integration host factor subunit alpha (110 aa).

This sequence belongs to the bacterial histone-like protein family. In terms of assembly, heterodimer of an alpha and a beta chain.

Functionally, this protein is one of the two subunits of integration host factor, a specific DNA-binding protein that functions in genetic recombination as well as in transcriptional and translational control. The polypeptide is Integration host factor subunit alpha (Nitrobacter hamburgensis (strain DSM 10229 / NCIMB 13809 / X14)).